The following is a 465-amino-acid chain: Glycine--tRNA ligase (465 aa).

Substrate is bound by residues Arg98 and Glu174. Residues 206 to 208 (RNE), 216 to 221 (FRTREF), 290 to 291 (EL), and 334 to 337 (GADR) contribute to the ATP site. 221–225 (FEQME) contacts substrate. A substrate-binding site is contributed by 330–334 (EPSLG).

It belongs to the class-II aminoacyl-tRNA synthetase family. In terms of assembly, homodimer.

The protein resides in the cytoplasm. The catalysed reaction is tRNA(Gly) + glycine + ATP = glycyl-tRNA(Gly) + AMP + diphosphate. Functionally, catalyzes the attachment of glycine to tRNA(Gly). The sequence is that of Glycine--tRNA ligase from Agathobacter rectalis (strain ATCC 33656 / DSM 3377 / JCM 17463 / KCTC 5835 / VPI 0990) (Eubacterium rectale).